Reading from the N-terminus, the 405-residue chain is Deoxyguanosinetriphosphate triphosphohydrolase-like protein (405 aa).

The HD domain maps to 75-219 (RLTHTIEVAQ…AAIADDIAYN (145 aa)).

The protein belongs to the dGTPase family. Type 2 subfamily.

This chain is Deoxyguanosinetriphosphate triphosphohydrolase-like protein, found in Agrobacterium fabrum (strain C58 / ATCC 33970) (Agrobacterium tumefaciens (strain C58)).